Here is a 973-residue protein sequence, read N- to C-terminus: Vacuolar membrane protease (973 aa).

The Cytoplasmic portion of the chain corresponds to 1–15 (MARQYSRTNPLGFTP). Residues 16-36 (WPVTIITALVYLALVIPLLVV) traverse the membrane as a helical segment. Topologically, residues 37-383 (QHVVPSAPGS…STLAVFELHT (347 aa)) are vacuolar. N-linked (GlcNAc...) asparagine glycosylation is found at Asn52 and Asn115. Residues His167 and Asp179 each coordinate Zn(2+). Residue Glu213 is the Proton acceptor of the active site. 3 residues coordinate Zn(2+): Glu214, Glu239, and His312. A helical transmembrane segment spans residues 384–404 (LFALSVTLLIVAPLVLLATSI). The Cytoplasmic segment spans residues 405–438 (ALVRADRMYLFRSTARVPGSDDFDEGVSLQGVRG). The helical transmembrane segment at 439-459 (FFRFPFLLVIPTGVAVGLAYL) threads the bilayer. At 460–469 (VTKINPYIIH) the chain is on the vacuolar side. The helical transmembrane segment at 470-490 (SSEYAVWSMMISAWVFLAWFV) threads the bilayer. At 491–504 (SRVADFARPSAFHR) the chain is on the cytoplasmic side. A helical membrane pass occupies residues 505 to 525 (VYVLTWMFVAEWVLLVIATVY). Residues 526-529 (ENRY) lie on the Vacuolar side of the membrane. Residues 530–550 (GLAGGYFVFFALSGTFLATWI) traverse the membrane as a helical segment. Residues 551-674 (SYLELFALPR…GLPKWTWVLQ (124 aa)) lie on the Cytoplasmic side of the membrane. The interval 572 to 623 (SRYASNHGSRLGTSSGEHGMDDAEDEEDDDGDDEDEARNVEEEPTESTSLLR) is disordered. Residues 574–587 (YASNHGSRLGTSSG) are compositionally biased toward polar residues. The segment covering 593-607 (DAEDEEDDDGDDEDE) has biased composition (acidic residues). A helical transmembrane segment spans residues 675-695 (FLLSAPIVLILVGPLALLLTA). Topologically, residues 696–708 (ALRQTAQDGSSPL) are vacuolar. Residues 709 to 729 (FVYIAIAVLTTLLVTPLLPFI) traverse the membrane as a helical segment. The Cytoplasmic portion of the chain corresponds to 730 to 735 (HRYTHH). A helical membrane pass occupies residues 736-756 (IPLFLLLVFTGTLIYNLVAFP). The Vacuolar portion of the chain corresponds to 757–973 (FSPSNRLKLF…LVEGSRRFEV (217 aa)). Asn803 and Asn839 each carry an N-linked (GlcNAc...) asparagine glycan.

This sequence belongs to the peptidase M28 family. Requires Zn(2+) as cofactor.

Its subcellular location is the vacuole membrane. Its function is as follows. May be involved in vacuolar sorting and osmoregulation. The chain is Vacuolar membrane protease from Aspergillus clavatus (strain ATCC 1007 / CBS 513.65 / DSM 816 / NCTC 3887 / NRRL 1 / QM 1276 / 107).